We begin with the raw amino-acid sequence, 87 residues long: DNA-directed RNA polymerase subunit omega (87 aa).

The protein belongs to the RNA polymerase subunit omega family. In terms of assembly, the RNAP catalytic core consists of 2 alpha, 1 beta, 1 beta' and 1 omega subunit. When a sigma factor is associated with the core the holoenzyme is formed, which can initiate transcription.

The enzyme catalyses RNA(n) + a ribonucleoside 5'-triphosphate = RNA(n+1) + diphosphate. Its function is as follows. Promotes RNA polymerase assembly. Latches the N- and C-terminal regions of the beta' subunit thereby facilitating its interaction with the beta and alpha subunits. The chain is DNA-directed RNA polymerase subunit omega from Pseudomonas syringae pv. syringae (strain B728a).